We begin with the raw amino-acid sequence, 427 residues long: UPF0229 protein YeaH (427 aa).

Over residues 79-90 (NDHFVQNDRIER) the composition is skewed to basic and acidic residues. The tract at residues 79–110 (NDHFVQNDRIERPQGGGGGSGSGQGQASQDGE) is disordered. Residues 92–102 (QGGGGGSGSGQ) show a composition bias toward gly residues.

The protein belongs to the UPF0229 family.

The protein is UPF0229 protein YeaH of Shigella boydii serotype 18 (strain CDC 3083-94 / BS512).